The following is a 400-amino-acid chain: Probable vacuolar protease A (400 aa).

The signal sequence occupies residues 1-18; sequence MKGSLLLAGATLLGCTSA. A propeptide spans 19–72 (activation peptide); sequence KLHSLKLKKVSLKEQLEHADIDVQIKSLGQKYMGIRPEQHEQQMFKEQTPIEVE. Positions 87–397 constitute a Peptidase A1 domain; the sequence is YFSEISIGTP…DLGKGTVGLA (311 aa). Residue aspartate 105 is part of the active site. Cysteine 118 and cysteine 123 are joined by a disulfide. The N-linked (GlcNAc...) asparagine glycan is linked to asparagine 140. Residue aspartate 289 is part of the active site. A disulfide bond links cysteine 323 and cysteine 356. An N-linked (GlcNAc...) asparagine glycan is attached at asparagine 340.

It belongs to the peptidase A1 family.

Its subcellular location is the vacuole lumen. It localises to the secreted. The catalysed reaction is Hydrolysis of proteins with broad specificity for peptide bonds. Cleaves -Leu-Leu-|-Val-Tyr- bond in a synthetic substrate. Does not act on esters of Tyr or Arg.. Functionally, vacuolar aspartic endopeptidase which is probably also secreted and contributes to virulence. This chain is Probable vacuolar protease A (PEP2), found in Arthroderma benhamiae (strain ATCC MYA-4681 / CBS 112371) (Trichophyton mentagrophytes).